The chain runs to 146 residues: 3-dehydroquinate dehydratase (146 aa).

The active-site Proton acceptor is Y22. Substrate contacts are provided by N73, H79, and D86. The active-site Proton donor is the H101. Residues 102–103 (IS) and R112 each bind substrate.

It belongs to the type-II 3-dehydroquinase family. Homododecamer.

The catalysed reaction is 3-dehydroquinate = 3-dehydroshikimate + H2O. It participates in metabolic intermediate biosynthesis; chorismate biosynthesis; chorismate from D-erythrose 4-phosphate and phosphoenolpyruvate: step 3/7. Functionally, catalyzes a trans-dehydration via an enolate intermediate. This Corynebacterium pseudotuberculosis (strain C231) protein is 3-dehydroquinate dehydratase (aroQ).